Here is a 134-residue protein sequence, read N- to C-terminus: MKPSERRKARRLAVQAIYSWQLSGNNIADVEHEFLTEQKIDGIDVAYFRELLSGTATKQAQIDEQIIPHIERPYNEVSPIEKAVLRLATYELTFRKDVPYKVAINEAIELAKAFGAEDGHKFVNGILDKIVGRK.

It belongs to the NusB family.

Functionally, involved in transcription antitermination. Required for transcription of ribosomal RNA (rRNA) genes. Binds specifically to the boxA antiterminator sequence of the ribosomal RNA (rrn) operons. The sequence is that of Transcription antitermination protein NusB from Shewanella sediminis (strain HAW-EB3).